Consider the following 275-residue polypeptide: Large ribosomal subunit protein uL2c (275 aa).

Residues 224-263 (VMNPVDHPHGGGEGRAPIGRKRPLTPWGRPALGKKSRKNH) form a disordered region.

It belongs to the universal ribosomal protein uL2 family. In terms of assembly, part of the 50S ribosomal subunit.

It localises to the plastid. The protein localises to the chloroplast. This is Large ribosomal subunit protein uL2c (rpl2) from Chaetosphaeridium globosum (Charophycean green alga).